An 86-amino-acid polypeptide reads, in one-letter code: UPF0367 protein PMN2A_1492 (86 aa).

Belongs to the UPF0367 family.

In Prochlorococcus marinus (strain NATL2A), this protein is UPF0367 protein PMN2A_1492.